The following is a 486-amino-acid chain: Small ribosomal subunit protein uS4m (486 aa).

The S4 RNA-binding domain maps to 103–172; it reads KRLDFALFRA…AKKPSFQEAL (70 aa).

This sequence belongs to the universal ribosomal protein uS4 family. As to quaternary structure, component of the mitochondrial small ribosomal subunit (mt-SSU). Mature yeast 74S mitochondrial ribosomes consist of a small (37S) and a large (54S) subunit. The 37S small subunit contains a 15S ribosomal RNA (15S mt-rRNA) and 34 different proteins. The 54S large subunit contains a 21S rRNA (21S mt-rRNA) and 46 different proteins. uS3m, uS4m and uS5m form the narrow entry site of the mRNA channel.

It localises to the mitochondrion. Component of the mitochondrial ribosome (mitoribosome), a dedicated translation machinery responsible for the synthesis of mitochondrial genome-encoded proteins, including at least some of the essential transmembrane subunits of the mitochondrial respiratory chain. The mitoribosomes are attached to the mitochondrial inner membrane and translation products are cotranslationally integrated into the membrane. In Saccharomyces cerevisiae (strain ATCC 204508 / S288c) (Baker's yeast), this protein is Small ribosomal subunit protein uS4m (NAM9).